Here is a 448-residue protein sequence, read N- to C-terminus: N-succinylarginine dihydrolase (448 aa).

Residues 19–28, Asn-110, and 137–138 contribute to the substrate site; these read GGLSYGNVAS and HR. Glu-174 is a catalytic residue. Position 214 (Arg-214) interacts with substrate. Residue His-250 is part of the active site. Substrate is bound by residues Asp-252 and Asn-365. Residue Cys-371 is the Nucleophile of the active site.

Belongs to the succinylarginine dihydrolase family. As to quaternary structure, homodimer.

It catalyses the reaction N(2)-succinyl-L-arginine + 2 H2O + 2 H(+) = N(2)-succinyl-L-ornithine + 2 NH4(+) + CO2. The protein operates within amino-acid degradation; L-arginine degradation via AST pathway; L-glutamate and succinate from L-arginine: step 2/5. Catalyzes the hydrolysis of N(2)-succinylarginine into N(2)-succinylornithine, ammonia and CO(2). The protein is N-succinylarginine dihydrolase of Ectopseudomonas mendocina (strain ymp) (Pseudomonas mendocina).